Here is a 284-residue protein sequence, read N- to C-terminus: MHAKMNGWAGVRLVTHCLNTRSRTYVALNMLAFARTPRGVPSCLFNKVWVSRYALVLILMVCASESSTSWAVTSNRLPNCSTITTTAGQDAELHGPAPLSCNVTQWGRYENGSTPVLWCTLWGSRTRVSLGHRVAFGCSWKTFFIYNVSESSGGTYYQKGYNCTDKHITLSCFNLTVVPRAVQSTTTVMTPTVVTNSTFSVSLVASRLTTNSSAFRHASYQRQQRVGNGTLSKNITNLAFTYGSWGVAMLLFAAVMVLVDLGLPQSAWRRWRSHVDDEERGLLM.

Asn-79, Asn-102, Asn-111, Asn-147, Asn-162, Asn-174, Asn-196, Asn-211, Asn-228, and Asn-234 each carry an N-linked (GlcNAc...) asparagine; by host glycan. A helical membrane pass occupies residues 239–259 (AFTYGSWGVAMLLFAAVMVLV).

This sequence belongs to the RL11 family.

It is found in the membrane. This is an uncharacterized protein from Human cytomegalovirus (strain AD169) (HHV-5).